The primary structure comprises 76 residues: uncharacterized protein (76 aa).

A helical transmembrane segment spans residues 18–38 (FISALFFFNAVCIVSDNLLII).

The protein resides in the cell membrane. This is an uncharacterized protein from Escherichia coli O6:H1 (strain CFT073 / ATCC 700928 / UPEC).